The following is a 520-amino-acid chain: mRNA-capping enzyme subunit beta (520 aa).

The interval 1–185 is disordered; sequence MNVGSILNDD…PQPVFDDQDD (185 aa). 2 stretches are compositionally biased toward polar residues: residues 11-21 and 44-56; these read PPSSGNANGND and ITSMLNDTPSDST. The segment covering 92–108 has biased composition (low complexity); the sequence is SSSSVGSSEHSSARSSP. Basic and acidic residues-rich tracts occupy residues 126–135 and 149–176; these read PATKTEKKAE and KLEEHENDTNKVEKVVDSAPEPKPKKEP.

It belongs to the fungal TPase family. As to quaternary structure, heterodimer. The mRNA-capping enzyme is composed of two separate chains alpha and beta, respectively a mRNA guanylyltransferase and an mRNA 5'-triphosphate monophosphatase. The cofactor is Mg(2+).

The protein resides in the nucleus. It carries out the reaction a 5'-end triphospho-ribonucleoside in mRNA + H2O = a 5'-end diphospho-ribonucleoside in mRNA + phosphate + H(+). In terms of biological role, first step of mRNA capping. Converts the 5'-triphosphate end of a nascent mRNA chain into a diphosphate end. The chain is mRNA-capping enzyme subunit beta (CET1) from Candida albicans (strain SC5314 / ATCC MYA-2876) (Yeast).